Consider the following 139-residue polypeptide: Acyl carrier protein 4, chloroplastic (139 aa).

A chloroplast-targeting transit peptide spans 1–55 (MASAAAGASICIKSASCSPLAPGRISSLRSVSLPVSRKSFPSLRSSKGSFARVSC). In terms of domain architecture, Carrier spans 59 to 134 (PETVAKVCRI…DAADLIEKLM (76 aa)). Ser94 carries the O-(pantetheine 4'-phosphoryl)serine modification.

It belongs to the acyl carrier protein (ACP) family. Post-translationally, 4'-phosphopantetheine is transferred from CoA to a specific serine of apo-ACP by acpS. This modification is essential for activity because fatty acids are bound in thioester linkage to the sulfhydryl of the prosthetic group.

The protein resides in the plastid. Its subcellular location is the chloroplast. It participates in lipid metabolism; fatty acid biosynthesis. Its function is as follows. Carrier of the growing fatty acid chain in fatty acid biosynthesis. This Cuphea lanceolata (Cigar flower) protein is Acyl carrier protein 4, chloroplastic (ACL1).